We begin with the raw amino-acid sequence, 545 residues long: Toxin BC_0920 (545 aa).

In terms of domain architecture, LXG spans 1–217 (MSLNMYLGEV…ARQAANSIEE (217 aa)).

The protein in the N-terminal section; belongs to the LXG family. It in the C-terminal section; belongs to the bacterial EndoU family. Probably interacts with cognate immunity protein BC_0921. The interaction inhibits the toxic activity of BC_0921.

Its subcellular location is the secreted. Toxic component of an LXG toxin-immunity module. The C-terminus (residues 322-545) has RNase activity in E.coli which is neutralized by cognate immunity protein BC_0921, but not by immunity proteins specific to other toxins with the LXG domain. Degrades 5S rRNA and several tRNAs in vitro; cleavage is endonucleolytic within the anticodon loop for tRNA(GAU-Ile) and tRNA(UUC-Glu) but total for 5S rRNA and at least one other tRNA. RNase activity is suppressed by cognate immunity protein BC_0921. This Bacillus cereus (strain ATCC 14579 / DSM 31 / CCUG 7414 / JCM 2152 / NBRC 15305 / NCIMB 9373 / NCTC 2599 / NRRL B-3711) protein is Toxin BC_0920.